Consider the following 125-residue polypeptide: Small ribosomal subunit protein uS12 (125 aa).

The tract at residues 1-27 (MPTINQLVRKGREKGEQKSTAPALKSC) is disordered. At Asp89 the chain carries 3-methylthioaspartic acid. Residues 103 to 125 (DASGVQKRNQGRSKYGTKRPKKK) form a disordered region. Residues 111–125 (NQGRSKYGTKRPKKK) are compositionally biased toward basic residues.

This sequence belongs to the universal ribosomal protein uS12 family. In terms of assembly, part of the 30S ribosomal subunit. Contacts proteins S8 and S17. May interact with IF1 in the 30S initiation complex.

Its function is as follows. With S4 and S5 plays an important role in translational accuracy. Interacts with and stabilizes bases of the 16S rRNA that are involved in tRNA selection in the A site and with the mRNA backbone. Located at the interface of the 30S and 50S subunits, it traverses the body of the 30S subunit contacting proteins on the other side and probably holding the rRNA structure together. The combined cluster of proteins S8, S12 and S17 appears to hold together the shoulder and platform of the 30S subunit. This is Small ribosomal subunit protein uS12 from Syntrophomonas wolfei subsp. wolfei (strain DSM 2245B / Goettingen).